The sequence spans 294 residues: 4-hydroxy-tetrahydrodipicolinate synthase (294 aa).

Position 44 (T44) interacts with pyruvate. The Proton donor/acceptor role is filled by Y132. K161 serves as the catalytic Schiff-base intermediate with substrate. I206 is a binding site for pyruvate.

Belongs to the DapA family. As to quaternary structure, homotetramer; dimer of dimers.

Its subcellular location is the cytoplasm. The enzyme catalyses L-aspartate 4-semialdehyde + pyruvate = (2S,4S)-4-hydroxy-2,3,4,5-tetrahydrodipicolinate + H2O + H(+). It participates in amino-acid biosynthesis; L-lysine biosynthesis via DAP pathway; (S)-tetrahydrodipicolinate from L-aspartate: step 3/4. Its activity is regulated as follows. Is not inhibited by (S)-lysine, in contrast to E.coli DapA. Catalyzes the condensation of (S)-aspartate-beta-semialdehyde [(S)-ASA] and pyruvate to 4-hydroxy-tetrahydrodipicolinate (HTPA). In Thermotoga maritima (strain ATCC 43589 / DSM 3109 / JCM 10099 / NBRC 100826 / MSB8), this protein is 4-hydroxy-tetrahydrodipicolinate synthase.